The primary structure comprises 384 residues: 1-deoxy-D-xylulose 5-phosphate reductoisomerase (384 aa).

The NADPH site is built by threonine 10, glycine 11, serine 12, isoleucine 13, glycine 36, and asparagine 123. Lysine 124 contributes to the 1-deoxy-D-xylulose 5-phosphate binding site. An NADPH-binding site is contributed by glutamate 125. Aspartate 149 contributes to the Mn(2+) binding site. 1-deoxy-D-xylulose 5-phosphate contacts are provided by serine 150, glutamate 151, serine 175, and histidine 198. Glutamate 151 is a Mn(2+) binding site. Glycine 204 lines the NADPH pocket. Residues serine 211, asparagine 216, lysine 217, and glutamate 220 each contribute to the 1-deoxy-D-xylulose 5-phosphate site. Glutamate 220 provides a ligand contact to Mn(2+).

The protein belongs to the DXR family. The cofactor is Mg(2+). It depends on Mn(2+) as a cofactor.

It catalyses the reaction 2-C-methyl-D-erythritol 4-phosphate + NADP(+) = 1-deoxy-D-xylulose 5-phosphate + NADPH + H(+). It participates in isoprenoid biosynthesis; isopentenyl diphosphate biosynthesis via DXP pathway; isopentenyl diphosphate from 1-deoxy-D-xylulose 5-phosphate: step 1/6. Functionally, catalyzes the NADPH-dependent rearrangement and reduction of 1-deoxy-D-xylulose-5-phosphate (DXP) to 2-C-methyl-D-erythritol 4-phosphate (MEP). The chain is 1-deoxy-D-xylulose 5-phosphate reductoisomerase from Chlorobium phaeovibrioides (strain DSM 265 / 1930) (Prosthecochloris vibrioformis (strain DSM 265)).